We begin with the raw amino-acid sequence, 408 residues long: Elongation factor Tu (408 aa).

A tr-type G domain is found at 10–219 (KTHVNVGTIG…ALDTYIPDPV (210 aa)). GTP contacts are provided by residues 19 to 26 (GHVDHGKT), 88 to 92 (DCPGH), and 143 to 146 (NKCD). Position 26 (Thr26) interacts with Mg(2+).

The protein belongs to the TRAFAC class translation factor GTPase superfamily. Classic translation factor GTPase family. EF-Tu/EF-1A subfamily. As to quaternary structure, monomer.

The protein resides in the cytoplasm. It carries out the reaction GTP + H2O = GDP + phosphate + H(+). Functionally, GTP hydrolase that promotes the GTP-dependent binding of aminoacyl-tRNA to the A-site of ribosomes during protein biosynthesis. The polypeptide is Elongation factor Tu (Brachyspira hyodysenteriae (strain ATCC 49526 / WA1)).